Here is a 269-residue protein sequence, read N- to C-terminus: MYAASREASSRSREALRAALTGSDSVAATTGSELFAVVAVLDDQRSLRVALADVSVPGSARAELSERVFGGKVSVATQAVLTTAVAQNWSRTSDMVDTLVLLGQEALLESAANAGRLDAVEDELFRLGRIIADNADLEQALSDRAKPAAAKRELIARLLAGKAEPVTISLAEQVVGRNTTRIGAAFDELSDLAAARRDQIVAHVRAAIALTSQQRERLAASLQRIYGKPVTVHVQVDPSLLSGLVVRIGDDVIDGSAVGRLERLRRELA.

It belongs to the ATPase delta chain family. As to quaternary structure, F-type ATPases have 2 components, F(1) - the catalytic core - and F(0) - the membrane proton channel. F(1) has five subunits: alpha(3), beta(3), gamma(1), delta(1), epsilon(1). F(0) has three main subunits: a(1), b(2) and c(10-14). The alpha and beta chains form an alternating ring which encloses part of the gamma chain. F(1) is attached to F(0) by a central stalk formed by the gamma and epsilon chains, while a peripheral stalk is formed by the delta and b chains.

It is found in the cell membrane. Functionally, f(1)F(0) ATP synthase produces ATP from ADP in the presence of a proton or sodium gradient. F-type ATPases consist of two structural domains, F(1) containing the extramembraneous catalytic core and F(0) containing the membrane proton channel, linked together by a central stalk and a peripheral stalk. During catalysis, ATP synthesis in the catalytic domain of F(1) is coupled via a rotary mechanism of the central stalk subunits to proton translocation. This protein is part of the stalk that links CF(0) to CF(1). It either transmits conformational changes from CF(0) to CF(1) or is implicated in proton conduction. The protein is ATP synthase subunit delta of Nocardia farcinica (strain IFM 10152).